Reading from the N-terminus, the 299-residue chain is 4-hydroxy-tetrahydrodipicolinate synthase (299 aa).

Residue threonine 51 coordinates pyruvate. The active-site Proton donor/acceptor is tyrosine 139. Lysine 167 (schiff-base intermediate with substrate) is an active-site residue. A pyruvate-binding site is contributed by isoleucine 209.

Belongs to the DapA family. In terms of assembly, homotetramer; dimer of dimers.

Its subcellular location is the cytoplasm. It catalyses the reaction L-aspartate 4-semialdehyde + pyruvate = (2S,4S)-4-hydroxy-2,3,4,5-tetrahydrodipicolinate + H2O + H(+). The protein operates within amino-acid biosynthesis; L-lysine biosynthesis via DAP pathway; (S)-tetrahydrodipicolinate from L-aspartate: step 3/4. Catalyzes the condensation of (S)-aspartate-beta-semialdehyde [(S)-ASA] and pyruvate to 4-hydroxy-tetrahydrodipicolinate (HTPA). In Methylobacterium radiotolerans (strain ATCC 27329 / DSM 1819 / JCM 2831 / NBRC 15690 / NCIMB 10815 / 0-1), this protein is 4-hydroxy-tetrahydrodipicolinate synthase.